Reading from the N-terminus, the 513-residue chain is GMP synthase [glutamine-hydrolyzing] (513 aa).

The region spanning 8–198 is the Glutamine amidotransferase type-1 domain; sequence KIIVLDYGSQ…ALNTCGAKGN (191 aa). Cys85 (nucleophile) is an active-site residue. Catalysis depends on residues His172 and Glu174. The 190-residue stretch at 199–388 folds into the GMPS ATP-PPase domain; that stretch reads WSMENFIDMQ…LGMPDEIVWR (190 aa). 226 to 232 provides a ligand contact to ATP; it reads SGGVDSS.

In terms of assembly, homodimer.

The catalysed reaction is XMP + L-glutamine + ATP + H2O = GMP + L-glutamate + AMP + diphosphate + 2 H(+). Its pathway is purine metabolism; GMP biosynthesis; GMP from XMP (L-Gln route): step 1/1. In terms of biological role, catalyzes the synthesis of GMP from XMP. This is GMP synthase [glutamine-hydrolyzing] from Lactococcus lactis subsp. cremoris (strain SK11).